The chain runs to 144 residues: Large ribosomal subunit protein uL11 (144 aa).

This sequence belongs to the universal ribosomal protein uL11 family. Part of the ribosomal stalk of the 50S ribosomal subunit. Interacts with L10 and the large rRNA to form the base of the stalk. L10 forms an elongated spine to which L12 dimers bind in a sequential fashion forming a multimeric L10(L12)X complex. Post-translationally, one or more lysine residues are methylated.

Forms part of the ribosomal stalk which helps the ribosome interact with GTP-bound translation factors. The sequence is that of Large ribosomal subunit protein uL11 from Polaromonas sp. (strain JS666 / ATCC BAA-500).